A 343-amino-acid chain; its full sequence is Protein SOSEKI 4 (343 aa).

The DIX-like oligomerization domain stretch occupies residues 18–109; that stretch reads RIVPVVYYLS…YVLKGSQILD (92 aa). Residues 148-194 form a disordered region; that stretch reads RKLSMDASTQTDDRRRRKSPVDEVNEVTELSREEITSPPQSDSSPET. Residues 184-194 are compositionally biased toward polar residues; sequence SPPQSDSSPET. The Association to cell membranes motif lies at 233–234; the sequence is CG.

Belongs to the SOSEKI family. Homodimer. Forms long polymer filaments with other SOKs proteins polymers (e.g. SOK1, SOK2, SOK3 and SOK4) crucial for polar localization and biological activity. Binds to ANGUSTIFOLIA (AN). Expressed during embryogenesis and in roots.

Its subcellular location is the cell membrane. SOSEKI proteins (SOK1-5) locally interpret global polarity cues and can influence cell division orientation to coordinate cell polarization relative to body axes, probably by guiding ANGUSTIFOLIA (AN) polarized localization. Positive regulator of auxin (indole-3-acetic acid, IAA) biosynthesis and signaling pathway leading to the modulation of seedling growth, plant and inflorescence development. Negative regulator of stress responses (e.g. salinity and osmotic stress). The chain is Protein SOSEKI 4 from Arabidopsis thaliana (Mouse-ear cress).